The following is a 928-amino-acid chain: Echinoderm microtubule-associated protein-like 4 (928 aa).

The interval 1 to 189 is microtubule-binding; the sequence is MDGFAGSLDD…IPSDVENYDD (189 aa). Residues 14–63 adopt a coiled-coil conformation; sequence AASTSDVQDRLSALELRVQQQEDEITVLKAALADVLRRLAISEDQVATVR. The interval 107–131 is disordered; sequence SAAKSVKRSSTIEKSHNSWDASEES. Residues 116 to 131 show a composition bias toward basic and acidic residues; sequence STIEKSHNSWDASEES. WD repeat units follow at residues 199-237, 241-288, 296-336, 343-378, 385-424, 442-480, 485-521, 524-563, 567-604, 610-646, 653-692, 702-760, and 767-806; these read LKLE…LFNY, TQRH…VWDS, VIGL…VWDW, AEIK…FWTW, RKQG…IWSK, QISR…MWDH, EREI…LRGT, DGFQ…LWNS, SLEW…VLDA, VSIH…LYNV, YSRY…YWDI, RSDC…LFQY, and APSH…QWRL. Positions 821-928 are disordered; the sequence is SSSAVNSPVV…ENQDDSSPLS (108 aa). Polar residues predominate over residues 836-845; sequence QPNTPTNLPQ. The segment covering 867 to 876 has biased composition (acidic residues); sequence DALEQPEELN. A compositionally biased stretch (polar residues) spans 877–898; sequence EVQSEKCSSQPEGANGQEPSNE.

It belongs to the WD repeat EMAP family. As to quaternary structure, homotrimer; self-association is mediated by the N-terminal coiled coil.

It localises to the cytoplasm. It is found in the cytoskeleton. The protein resides in the spindle. The protein localises to the microtubule organizing center. Its subcellular location is the midbody. In terms of biological role, essential for the formation and stability of microtubules (MTs). Required for the organization of the mitotic spindle and for the proper attachment of kinetochores to MTs. Promotes the recruitment of NUDC to the mitotic spindle for mitotic progression. In Xenopus tropicalis (Western clawed frog), this protein is Echinoderm microtubule-associated protein-like 4 (eml4).